Consider the following 438-residue polypeptide: 3-phosphoshikimate 1-carboxyvinyltransferase (438 aa).

Positions 26, 27, and 31 each coordinate 3-phosphoshikimate. Lys-26 contacts phosphoenolpyruvate. Phosphoenolpyruvate is bound by residues Gly-99 and Arg-127. Positions 170, 171, 172, 199, 314, and 343 each coordinate 3-phosphoshikimate. Phosphoenolpyruvate is bound at residue Gln-172. Residue Glu-314 is the Proton acceptor of the active site. Phosphoenolpyruvate-binding residues include Arg-347, Arg-388, and Lys-413.

The protein belongs to the EPSP synthase family. In terms of assembly, monomer.

Its subcellular location is the cytoplasm. It catalyses the reaction 3-phosphoshikimate + phosphoenolpyruvate = 5-O-(1-carboxyvinyl)-3-phosphoshikimate + phosphate. It functions in the pathway metabolic intermediate biosynthesis; chorismate biosynthesis; chorismate from D-erythrose 4-phosphate and phosphoenolpyruvate: step 6/7. Catalyzes the transfer of the enolpyruvyl moiety of phosphoenolpyruvate (PEP) to the 5-hydroxyl of shikimate-3-phosphate (S3P) to produce enolpyruvyl shikimate-3-phosphate and inorganic phosphate. This is 3-phosphoshikimate 1-carboxyvinyltransferase from Mycobacterium sp. (strain MCS).